Reading from the N-terminus, the 185-residue chain is Hypoxanthine/guanine phosphoribosyltransferase (185 aa).

Belongs to the purine/pyrimidine phosphoribosyltransferase family. Archaeal HPRT subfamily. In terms of assembly, homodimer.

Its subcellular location is the cytoplasm. The catalysed reaction is IMP + diphosphate = hypoxanthine + 5-phospho-alpha-D-ribose 1-diphosphate. It carries out the reaction GMP + diphosphate = guanine + 5-phospho-alpha-D-ribose 1-diphosphate. Its pathway is purine metabolism; IMP biosynthesis via salvage pathway; IMP from hypoxanthine: step 1/1. Its function is as follows. Catalyzes a salvage reaction resulting in the formation of IMP that is energically less costly than de novo synthesis. This Methanococcus vannielii (strain ATCC 35089 / DSM 1224 / JCM 13029 / OCM 148 / SB) protein is Hypoxanthine/guanine phosphoribosyltransferase.